The chain runs to 349 residues: Ferredoxin--NADP reductase (349 aa).

Residues aspartate 43, glutamine 51, tyrosine 56, valine 96, phenylalanine 131, aspartate 295, and serine 336 each contribute to the FAD site.

The protein belongs to the ferredoxin--NADP reductase type 2 family. In terms of assembly, homodimer. FAD is required as a cofactor.

It catalyses the reaction 2 reduced [2Fe-2S]-[ferredoxin] + NADP(+) + H(+) = 2 oxidized [2Fe-2S]-[ferredoxin] + NADPH. The chain is Ferredoxin--NADP reductase from Paraburkholderia phytofirmans (strain DSM 17436 / LMG 22146 / PsJN) (Burkholderia phytofirmans).